The chain runs to 417 residues: UDP-N-acetylmuramoylalanine--D-glutamate ligase (417 aa).

104–110 (GSNGKST) contributes to the ATP binding site.

The protein belongs to the MurCDEF family.

It is found in the cytoplasm. The enzyme catalyses UDP-N-acetyl-alpha-D-muramoyl-L-alanine + D-glutamate + ATP = UDP-N-acetyl-alpha-D-muramoyl-L-alanyl-D-glutamate + ADP + phosphate + H(+). It functions in the pathway cell wall biogenesis; peptidoglycan biosynthesis. Cell wall formation. Catalyzes the addition of glutamate to the nucleotide precursor UDP-N-acetylmuramoyl-L-alanine (UMA). The polypeptide is UDP-N-acetylmuramoylalanine--D-glutamate ligase (Francisella tularensis subsp. novicida (strain U112)).